Here is a 152-residue protein sequence, read N- to C-terminus: 1,4-dihydroxy-2-naphthoyl-CoA hydrolase (152 aa).

Asp20 is a catalytic residue.

This sequence belongs to the 4-hydroxybenzoyl-CoA thioesterase family. DHNA-CoA hydrolase subfamily.

The catalysed reaction is 1,4-dihydroxy-2-naphthoyl-CoA + H2O = 1,4-dihydroxy-2-naphthoate + CoA + H(+). The protein operates within cofactor biosynthesis; phylloquinone biosynthesis. It functions in the pathway quinol/quinone metabolism; 1,4-dihydroxy-2-naphthoate biosynthesis; 1,4-dihydroxy-2-naphthoate from chorismate: step 7/7. Catalyzes the hydrolysis of 1,4-dihydroxy-2-naphthoyl-CoA (DHNA-CoA) to 1,4-dihydroxy-2-naphthoate (DHNA), a reaction involved in phylloquinone (vitamin K1) biosynthesis. The chain is 1,4-dihydroxy-2-naphthoyl-CoA hydrolase from Synechococcus sp. (strain CC9311).